The following is a 310-amino-acid chain: N-acyl-aromatic-L-amino acid amidohydrolase (carboxylate-forming) (310 aa).

Zn(2+)-binding residues include H20 and E23. Residues R62 and 69 to 70 contribute to the substrate site; that span reads NR. H113 contributes to the Zn(2+) binding site. The substrate site is built by E176 and Y286.

This sequence belongs to the AspA/AstE family. Aspartoacylase subfamily. In terms of assembly, homotetramer. Zn(2+) is required as a cofactor.

The protein resides in the apical cell membrane. The protein localises to the cytoplasm. It catalyses the reaction an N-acyl-aromatic L-alpha-amino acid + H2O = an aromatic L-alpha-amino acid + a carboxylate. The enzyme catalyses an N-acetyl-L-cysteine-S-conjugate + H2O = an S-substituted L-cysteine + acetate. Functionally, plays an important role in deacetylating mercapturic acids in kidney proximal tubules. This chain is N-acyl-aromatic-L-amino acid amidohydrolase (carboxylate-forming) (acy3), found in Xenopus tropicalis (Western clawed frog).